We begin with the raw amino-acid sequence, 294 residues long: Aquaporin-B (294 aa).

The disordered stretch occupies residues 1 to 31 (MSLKRSDDYQDLEEGIAMEDGGNIKDEEEKP). The Cytoplasmic portion of the chain corresponds to 1 to 42 (MSLKRSDDYQDLEEGIAMEDGGNIKDEEEKPLDPIEEQNKKR). Positions 22 to 31 (GNIKDEEEKP) are enriched in basic and acidic residues. A helical transmembrane segment spans residues 43–63 (WVLIRAVLGELLCTFLFVYVL). The Extracellular segment spans residues 64–79 (CATSANFIRLGSPPNP). O-linked (GalNAc...) serine glycosylation occurs at Ser75. A helical transmembrane segment spans residues 80-100 (VVGGLSTGFAAVALIYSFADV). Residues 101–123 (SGAHFNPAVTFATCVTRKTSITK) lie on the Cytoplasmic side of the membrane. The short motif at 106-108 (NPA) is the NPA 1 element. The chain crosses the membrane as a helical span at residues 124–144 (GLMYVGAQLVGSVLASLILLA). The Extracellular portion of the chain corresponds to 145–172 (TFPGNFPGDKNAASAVAIAPSTDANIGN). Residues 173–193 (AFLTELVLTFILVYVIFAVAF) traverse the membrane as a helical segment. Topologically, residues 194 to 224 (DTVDNSVKTKVVGKSSSNNLTIYTTSGQTKA) are cytoplasmic. The required for water permeability stretch occupies residues 208–219 (SSSNNLTIYTTS). Residues 225–245 (GFAPIAIGFTLGFLCFLGGSV) traverse the membrane as a helical segment. Residues 246-268 (SGGAFNPARVFGTALVGNNWTRH) lie on the Extracellular side of the membrane. The NPA 2 motif lies at 251–253 (NPA). A helical membrane pass occupies residues 269 to 289 (WMYWIADFLGAGLAGFAQKFF). Residues 290-294 (SSTHK) are Cytoplasmic-facing.

Belongs to the MIP/aquaporin (TC 1.A.8) family. Glycosylated and non-glycosylated forms exist throughout all developmental stages.

The protein resides in the cell membrane. The protein localises to the cytoplasmic vesicle. Putatively gated water-specific channel, requiring a cysteine residue within the channel. Impermeable to water, glycerol and urea when expressed in Xenopus oocytes. Not regulated by pH; channels remain impermeable to water at pH 7.4 and 5.2. This chain is Aquaporin-B, found in Dictyostelium discoideum (Social amoeba).